We begin with the raw amino-acid sequence, 197 residues long: MPIPASPLHPPLPSLLLYLLLELAGVTHVFHVQQTEMSQTVSTGESIILSCSVPNTLPNGPVLWFKGTGPNRKLIYNFKQGNFPRVKEIGDTTKPGNTDFSTRIREISLADAGTYYCVKFIKGRAIKEYQSGRGTQVFVTEQNPRPPKNRPAGRAGSRAHHDAHTCLSALPERNSTNYFVQPCCCLRLLGLTGLLSK.

An N-terminal signal peptide occupies residues 1–29; sequence MPIPASPLHPPLPSLLLYLLLELAGVTHV. Residues 31-135 enclose the Ig-like V-type domain; the sequence is HVQQTEMSQT…IKEYQSGRGT (105 aa). C51 and C117 are oxidised to a cystine. The disordered stretch occupies residues 139–158; the sequence is VTEQNPRPPKNRPAGRAGSR. N174 is a glycosylation site (N-linked (GlcNAc...) asparagine).

It is found in the secreted. This chain is Signal-regulatory protein delta (SIRPD), found in Homo sapiens (Human).